Here is a 230-residue protein sequence, read N- to C-terminus: Cytidylate kinase (230 aa).

Residue 11 to 19 (GQSAAGKST) participates in ATP binding.

This sequence belongs to the cytidylate kinase family. Type 1 subfamily.

It is found in the cytoplasm. It carries out the reaction CMP + ATP = CDP + ADP. It catalyses the reaction dCMP + ATP = dCDP + ADP. The chain is Cytidylate kinase from Chloroflexus aggregans (strain MD-66 / DSM 9485).